Consider the following 289-residue polypeptide: Formamidopyrimidine-DNA glycosylase (289 aa).

The Schiff-base intermediate with DNA role is filled by P2. Catalysis depends on E3, which acts as the Proton donor. K61 (proton donor; for beta-elimination activity) is an active-site residue. Positions 97, 119, and 168 each coordinate DNA. The segment at 254-288 adopts an FPG-type zinc-finger fold; it reads NAYGRAGKPCPRCGEPIVRVQWTNRSSHFCPQCQS. R278 (proton donor; for delta-elimination activity) is an active-site residue.

This sequence belongs to the FPG family. As to quaternary structure, monomer. It depends on Zn(2+) as a cofactor.

The enzyme catalyses Hydrolysis of DNA containing ring-opened 7-methylguanine residues, releasing 2,6-diamino-4-hydroxy-5-(N-methyl)formamidopyrimidine.. It carries out the reaction 2'-deoxyribonucleotide-(2'-deoxyribose 5'-phosphate)-2'-deoxyribonucleotide-DNA = a 3'-end 2'-deoxyribonucleotide-(2,3-dehydro-2,3-deoxyribose 5'-phosphate)-DNA + a 5'-end 5'-phospho-2'-deoxyribonucleoside-DNA + H(+). In terms of biological role, involved in base excision repair of DNA damaged by oxidation or by mutagenic agents. Acts as a DNA glycosylase that recognizes and removes damaged bases. Has a preference for oxidized purines, such as 7,8-dihydro-8-oxoguanine (8-oxoG). Has AP (apurinic/apyrimidinic) lyase activity and introduces nicks in the DNA strand. Cleaves the DNA backbone by beta-delta elimination to generate a single-strand break at the site of the removed base with both 3'- and 5'-phosphates. The polypeptide is Formamidopyrimidine-DNA glycosylase (Corynebacterium urealyticum (strain ATCC 43042 / DSM 7109)).